A 190-amino-acid polypeptide reads, in one-letter code: Putative triphosphatase YjbK (190 aa).

Residues 4-189 (EIEIEFKNML…LRFYEEKRKS (186 aa)) form the CYTH domain.

This Bacillus subtilis (strain 168) protein is Putative triphosphatase YjbK (yjbK).